The following is a 157-amino-acid chain: Endoribonuclease YbeY (157 aa).

Residues His-118, His-122, and His-128 each coordinate Zn(2+).

Belongs to the endoribonuclease YbeY family. Requires Zn(2+) as cofactor.

The protein resides in the cytoplasm. In terms of biological role, single strand-specific metallo-endoribonuclease involved in late-stage 70S ribosome quality control and in maturation of the 3' terminus of the 16S rRNA. This is Endoribonuclease YbeY from Bordetella parapertussis (strain 12822 / ATCC BAA-587 / NCTC 13253).